The chain runs to 265 residues: Short chain dehydrogenase mdpC (265 aa).

NADP(+) is bound by residues I25, N98, and R131. Catalysis depends on proton donor residues S147 and S148. Positions 162, 166, and 197 each coordinate NADP(+). Residue Y162 is the Proton acceptor of the active site. Residue K166 is the Lowers pKa of active site Tyr of the active site.

Belongs to the short-chain dehydrogenases/reductases (SDR) family.

It catalyses the reaction 3,8,9,10-tetrahydroxy-6-methyl-1,4-dihydroanthracen-1-one + NADPH + H(+) = (3R)-3,8,9,10-tetrahydroxy-6-methyl-1,2,3,4-tetrahydroanthracen-1-one + NADP(+). The protein operates within secondary metabolite biosynthesis. Its function is as follows. Short chain dehydrogenase; part of the gene cluster that mediates the biosynthesis of monodictyphenone, a prenyl xanthone derivative. The pathway begins with the synthesis of atrochrysone thioester by the polyketide synthase (PKS) mdpG. The atrochrysone carboxyl ACP thioesterase mdpF then breaks the thioester bond and releases the atrochrysone carboxylic acid from mdpG. The atrochrysone carboxylic acid is then converted to atrochrysone which is further transformed into emodin anthrone. The next step is performed by the anthrone oxygenase mdpH that catalyzes the oxidation of emodinanthrone to emodin. Emodin is further modified to yield monodictyphenone via several steps involving mdpB, mdpC mdpJ, mdpK and mdpL. The short chain dehydrogenase mdpC converts the tautomers of emodin hydroquinone into the 3-hydroxy-3,4-dihydroan-thracen-1(2H)-one derivative. These enzymes with xptA, xptB and xptC are also proposed to be involved in the synthesis of shamixanthone from emodin. Especially, direct reduction of emodin by the short chain dehydrogenase mdpC followed by dehydration catalyzed by the scytalone dehydratase-like protein mdpB gives loss of oxygen and formation of chrysophanol intermediate in two simple steps. This chain is Short chain dehydrogenase mdpC, found in Emericella nidulans (strain FGSC A4 / ATCC 38163 / CBS 112.46 / NRRL 194 / M139) (Aspergillus nidulans).